A 619-amino-acid chain; its full sequence is Hypermethylated in cancer 2 protein (619 aa).

The BTB domain maps to 46–109; the sequence is CDVIIMVENS…IYTGKLLPSD (64 aa). A phosphoserine mark is found at Ser-166, Ser-169, and Ser-197. Disordered stretches follow at residues 180–293 and 307–426; these read DVRK…VGNS and MDVE…GHTG. Gly residues predominate over residues 214–228; that stretch reads LGLGGPAGGEMGLGG. Positions 247–249 are binding to CtBP; that stretch reads DLS. A compositionally biased stretch (polar residues) spans 281–293; that stretch reads APTSTSALPVGNS. Positions 337–357 are enriched in basic and acidic residues; sequence KKDWNKKEPVAGSPFDRRETG. A phosphoserine mark is found at Ser-349 and Ser-416. 5 C2H2-type zinc fingers span residues 446–468, 509–531, 537–559, 565–587, and 593–615; these read YVCI…VETH, FKCS…EKTH, FPCN…MRSH, FACD…MRVH, and YECQ…LRMH.

It belongs to the krueppel C2H2-type zinc-finger protein family. Hic subfamily. As to quaternary structure, self-associates. Interacts with HIC1.

The protein localises to the nucleus. Its function is as follows. Transcriptional repressor. The chain is Hypermethylated in cancer 2 protein (Hic2) from Mus musculus (Mouse).